Here is a 259-residue protein sequence, read N- to C-terminus: MTKTLTQHLETIKREGKGIFLPYIMAGDHEKGLAGLAETIAFLENLGVSAIEIGLPFSDPVADGPVIEEAGLRSLGHHTSAKSLVASLQKLDTQLPLIIMTYFNPIFQYGLKDFVKDLATTPVKGLIIPDLPYEHRNFILPLLEDSDLALIPLVSLTTGLERQQELIKEAEGFIYAVAINGVTGKSGSYRNDLDQHLSKLHDIAEIPVLTGFGVSTLEDVDRFNQVSDGVIVGSKIVKALHEKDDSIAAFIQEAAAYKK.

Active-site proton acceptor residues include E52 and D63.

This sequence belongs to the TrpA family. Tetramer of two alpha and two beta chains.

The enzyme catalyses (1S,2R)-1-C-(indol-3-yl)glycerol 3-phosphate + L-serine = D-glyceraldehyde 3-phosphate + L-tryptophan + H2O. It functions in the pathway amino-acid biosynthesis; L-tryptophan biosynthesis; L-tryptophan from chorismate: step 5/5. Its function is as follows. The alpha subunit is responsible for the aldol cleavage of indoleglycerol phosphate to indole and glyceraldehyde 3-phosphate. This Streptococcus gordonii (strain Challis / ATCC 35105 / BCRC 15272 / CH1 / DL1 / V288) protein is Tryptophan synthase alpha chain.